Reading from the N-terminus, the 54-residue chain is Putative ankyrin repeat protein RC0701 (54 aa).

The stretch at 17–46 (SGKTPLDWYSDYNATKIVETLIKNGGNVSS) is one ANK repeat.

This is Putative ankyrin repeat protein RC0701 from Rickettsia conorii (strain ATCC VR-613 / Malish 7).